The following is a 763-amino-acid chain: 5-methyltetrahydropteroyltriglutamate--homocysteine methyltransferase (763 aa).

Residues 16-19 (RELK) and K114 contribute to the 5-methyltetrahydropteroyltri-L-glutamate site. L-homocysteine-binding positions include 438-440 (IGS) and E491. Residues 438 to 440 (IGS) and E491 contribute to the L-methionine site. 5-methyltetrahydropteroyltri-L-glutamate contacts are provided by residues 522 to 523 (RC) and W568. Residue D606 participates in L-homocysteine binding. Residue D606 participates in L-methionine binding. E612 contacts 5-methyltetrahydropteroyltri-L-glutamate. Zn(2+) contacts are provided by H648, C650, and E672. The active-site Proton donor is the H701. C733 is a Zn(2+) binding site.

This sequence belongs to the vitamin-B12 independent methionine synthase family. Zn(2+) is required as a cofactor.

It catalyses the reaction 5-methyltetrahydropteroyltri-L-glutamate + L-homocysteine = tetrahydropteroyltri-L-glutamate + L-methionine. It functions in the pathway amino-acid biosynthesis; L-methionine biosynthesis via de novo pathway; L-methionine from L-homocysteine (MetE route): step 1/1. Its function is as follows. Catalyzes the transfer of a methyl group from 5-methyltetrahydrofolate to homocysteine resulting in methionine formation. The protein is 5-methyltetrahydropteroyltriglutamate--homocysteine methyltransferase of Parvibaculum lavamentivorans (strain DS-1 / DSM 13023 / NCIMB 13966).